The following is a 69-amino-acid chain: Large ribosomal subunit protein uL29 (69 aa).

The protein belongs to the universal ribosomal protein uL29 family.

The sequence is that of Large ribosomal subunit protein uL29 from Natronomonas pharaonis (strain ATCC 35678 / DSM 2160 / CIP 103997 / JCM 8858 / NBRC 14720 / NCIMB 2260 / Gabara) (Halobacterium pharaonis).